Reading from the N-terminus, the 161-residue chain is Eukaryotic translation initiation factor 5A-1 (161 aa).

Position 54 is a hypusine (K54).

It belongs to the eIF-5A family. Post-translationally, lys-54 undergoes hypusination, a unique post-translational modification that consists in the addition of a butylamino group from spermidine to lysine side chain, leading to the formation of the unusual amino acid hypusine. eIF-5As are the only known proteins to undergo this modification, which is essential for their function. In terms of tissue distribution, expressed specifically in the germline in the distal region of gonads where germ cells actively proliferate.

It is found in the cytoplasm. Functionally, translation factor that promotes translation elongation and termination, particularly upon ribosome stalling at specific amino acid sequence contexts. Binds between the exit (E) and peptidyl (P) site of the ribosome and promotes rescue of stalled ribosome: specifically required for efficient translation of polyproline-containing peptides as well as other motifs that stall the ribosome. Acts as a ribosome quality control (RQC) cofactor by joining the RQC complex to facilitate peptidyl transfer during CAT tailing step. Required for mitotic germ cell proliferation, gametogenesis after entry into meiosis, and localization of the P granule component pgl-1 on P granules. In Caenorhabditis elegans, this protein is Eukaryotic translation initiation factor 5A-1 (iff-1).